Here is a 159-residue protein sequence, read N- to C-terminus: NADH-quinone oxidoreductase subunit B (159 aa).

Residues C36, C37, C102, and C132 each coordinate [4Fe-4S] cluster.

This sequence belongs to the complex I 20 kDa subunit family. As to quaternary structure, NDH-1 is composed of 14 different subunits. Subunits NuoB, C, D, E, F, and G constitute the peripheral sector of the complex. It depends on [4Fe-4S] cluster as a cofactor.

The protein localises to the cell inner membrane. It catalyses the reaction a quinone + NADH + 5 H(+)(in) = a quinol + NAD(+) + 4 H(+)(out). Its function is as follows. NDH-1 shuttles electrons from NADH, via FMN and iron-sulfur (Fe-S) centers, to quinones in the respiratory chain. Couples the redox reaction to proton translocation (for every two electrons transferred, four hydrogen ions are translocated across the cytoplasmic membrane), and thus conserves the redox energy in a proton gradient. The chain is NADH-quinone oxidoreductase subunit B from Albidiferax ferrireducens (strain ATCC BAA-621 / DSM 15236 / T118) (Rhodoferax ferrireducens).